The sequence spans 108 residues: Thiosulfate sulfurtransferase GlpE (108 aa).

One can recognise a Rhodanese domain in the interval 17-105 (QEKEAVLVDI…WQRQFPAEVA (89 aa)). Cys65 functions as the Cysteine persulfide intermediate in the catalytic mechanism.

The protein belongs to the GlpE family.

The protein localises to the cytoplasm. The enzyme catalyses thiosulfate + hydrogen cyanide = thiocyanate + sulfite + 2 H(+). It carries out the reaction thiosulfate + [thioredoxin]-dithiol = [thioredoxin]-disulfide + hydrogen sulfide + sulfite + 2 H(+). Functionally, transferase that catalyzes the transfer of sulfur from thiosulfate to thiophilic acceptors such as cyanide or dithiols. May function in a CysM-independent thiosulfate assimilation pathway by catalyzing the conversion of thiosulfate to sulfite, which can then be used for L-cysteine biosynthesis. This chain is Thiosulfate sulfurtransferase GlpE, found in Escherichia coli O45:K1 (strain S88 / ExPEC).